The chain runs to 197 residues: HTH-type transcriptional regulator BetI (197 aa).

The HTH tetR-type domain occupies 8 to 68 (PIRRQQLIQA…ATMRHLMNAL (61 aa)). Residues 31 to 50 (SIALIARLAGVSNGIISHYF) constitute a DNA-binding region (H-T-H motif).

The protein operates within amine and polyamine biosynthesis; betaine biosynthesis via choline pathway [regulation]. In terms of biological role, repressor involved in the biosynthesis of the osmoprotectant glycine betaine. It represses transcription of the choline transporter BetT and the genes of BetAB involved in the synthesis of glycine betaine. This is HTH-type transcriptional regulator BetI from Pseudomonas syringae pv. tomato (strain ATCC BAA-871 / DC3000).